Consider the following 479-residue polypeptide: Ribulose bisphosphate carboxylase large chain (479 aa).

Positions 1-2 (MS) are excised as a propeptide. 2 residues coordinate substrate: Asn-123 and Thr-173. The active-site Proton acceptor is Lys-175. Lys-177 provides a ligand contact to substrate. 3 residues coordinate Mg(2+): Lys-201, Asp-203, and Glu-204. Lys-201 carries the post-translational modification N6-carboxylysine. A Phosphoserine modification is found at Ser-208. His-294 acts as the Proton acceptor in catalysis. Substrate-binding residues include Arg-295 and His-327. Thr-330 carries the post-translational modification Phosphothreonine. Ser-379 contributes to the substrate binding site.

It belongs to the RuBisCO large chain family. Type I subfamily. In terms of assembly, heterohexadecamer of 8 large chains and 8 small chains; disulfide-linked. The disulfide link is formed within the large subunit homodimers. The cofactor is Mg(2+). The disulfide bond which can form in the large chain dimeric partners within the hexadecamer appears to be associated with oxidative stress and protein turnover.

Its subcellular location is the plastid. It is found in the chloroplast. The catalysed reaction is 2 (2R)-3-phosphoglycerate + 2 H(+) = D-ribulose 1,5-bisphosphate + CO2 + H2O. It catalyses the reaction D-ribulose 1,5-bisphosphate + O2 = 2-phosphoglycolate + (2R)-3-phosphoglycerate + 2 H(+). Functionally, ruBisCO catalyzes two reactions: the carboxylation of D-ribulose 1,5-bisphosphate, the primary event in carbon dioxide fixation, as well as the oxidative fragmentation of the pentose substrate in the photorespiration process. Both reactions occur simultaneously and in competition at the same active site. In Draba nemorosa (Woodland whitlowgrass), this protein is Ribulose bisphosphate carboxylase large chain.